Here is a 43-residue protein sequence, read N- to C-terminus: Disintegrin CV (43 aa).

4 disulfides stabilise this stretch: Cys1–Cys10, Cys6–Cys29, Cys7–Cys34, and Cys19–Cys36. A Disintegrin domain is found at 1–43 (CTTGPCCRQCKLKPAGTTCWRTSVSSHYCTGRSCECPSYPGNG). The Cell attachment site; atypical (RTS) signature appears at 21–23 (RTS).

It belongs to the disintegrin family. Short disintegrin subfamily. Monomer. In terms of tissue distribution, expressed by the venom gland.

The protein localises to the secreted. Specifically interacts with the alpha-1/beta-1 integrin (ITGA1/ITGB1). Exhibits highly inhibitory effects on cell adhesion and cell migration to collagens I and IV. Also shows in vivo anti-angiogenic activity. This is Disintegrin CV from Cerastes vipera (Sahara sand viper).